Consider the following 321-residue polypeptide: D-alanine--D-alanine ligase (321 aa).

The 195-residue stretch at 121–315 folds into the ATP-grasp domain; that stretch reads RSCFLKNNIN…FTNLIEEIIK (195 aa). 148 to 199 provides a ligand contact to ATP; the sequence is MKRPYVIKPLKQGSSIGVEVIFEEDDFHFIDYDFPYGEDIIIEQYIQGQELQ. Positions 268, 282, and 284 each coordinate Mg(2+).

Belongs to the D-alanine--D-alanine ligase family. Mg(2+) is required as a cofactor. Requires Mn(2+) as cofactor.

The protein resides in the cytoplasm. It carries out the reaction 2 D-alanine + ATP = D-alanyl-D-alanine + ADP + phosphate + H(+). It functions in the pathway cell wall biogenesis; peptidoglycan biosynthesis. Functionally, cell wall formation. This chain is D-alanine--D-alanine ligase, found in Rickettsia typhi (strain ATCC VR-144 / Wilmington).